Reading from the N-terminus, the 180-residue chain is Adenine phosphoribosyltransferase (180 aa).

This sequence belongs to the purine/pyrimidine phosphoribosyltransferase family. Homodimer.

The protein localises to the cytoplasm. The enzyme catalyses AMP + diphosphate = 5-phospho-alpha-D-ribose 1-diphosphate + adenine. Its pathway is purine metabolism; AMP biosynthesis via salvage pathway; AMP from adenine: step 1/1. In terms of biological role, catalyzes a salvage reaction resulting in the formation of AMP, that is energically less costly than de novo synthesis. The chain is Adenine phosphoribosyltransferase from Mycolicibacterium smegmatis (strain ATCC 700084 / mc(2)155) (Mycobacterium smegmatis).